The chain runs to 456 residues: Putative dihydroorotase (456 aa).

The protein belongs to the metallo-dependent hydrolases superfamily. DHOase family. Class I DHOase subfamily.

It carries out the reaction (S)-dihydroorotate + H2O = N-carbamoyl-L-aspartate + H(+). Its pathway is pyrimidine metabolism; UMP biosynthesis via de novo pathway; (S)-dihydroorotate from bicarbonate: step 3/3. Its function is as follows. Catalyzes the reversible cyclization of carbamoyl aspartate to dihydroorotate. The sequence is that of Putative dihydroorotase from Rhodopirellula baltica (strain DSM 10527 / NCIMB 13988 / SH1).